We begin with the raw amino-acid sequence, 349 residues long: Leucine-rich repeat-containing protein 58 (349 aa).

LRR repeat units lie at residues 14 to 34 (NLTH…NKRK), 35 to 56 (DVQQ…VNSF), 58 to 80 (HLHL…LGLT), 81 to 102 (KLKT…KELG), 105 to 125 (RLEV…QFLQ), 128 to 149 (TLKS…IENL), 151 to 173 (SLEF…ANLP), 174 to 195 (YLSY…LAQV), 197 to 217 (SLRS…ILSL), and 219 to 239 (QLQE…RDLT).

The protein is Leucine-rich repeat-containing protein 58 (lrrc58) of Xenopus tropicalis (Western clawed frog).